Consider the following 155-residue polypeptide: MTDAQTPSEDLPQLQVNMQYIKDLSFEIPGAPHSFIEMQGKNPEIPIHVDVNVGNVGANAYEVVLHLKIEALLDGKALFILELAYAGVFTLNLPEEQIHPVLLIECPRLLFPFARNIVADMTRDGGLPPLLLQPLDFVELYRARAAEMNAQQGQA.

Belongs to the SecB family. Homotetramer, a dimer of dimers. One homotetramer interacts with 1 SecA dimer.

Its subcellular location is the cytoplasm. Functionally, one of the proteins required for the normal export of preproteins out of the cell cytoplasm. It is a molecular chaperone that binds to a subset of precursor proteins, maintaining them in a translocation-competent state. It also specifically binds to its receptor SecA. This chain is Protein-export protein SecB, found in Paramagnetospirillum magneticum (strain ATCC 700264 / AMB-1) (Magnetospirillum magneticum).